Reading from the N-terminus, the 167-residue chain is uncharacterized protein (167 aa).

One can recognise an N-acetyltransferase domain in the interval 9-167; that stretch reads PVMRRLTLQD…DCEVRMLREL (159 aa).

The protein belongs to the acetyltransferase family.

This is an uncharacterized protein from Escherichia coli (strain K12).